Reading from the N-terminus, the 437-residue chain is F-box/FBD/LRR-repeat protein At5g22700 (437 aa).

Positions 5 to 51 (GDRISSLPDELLCQILSNLPTKNAVTTSILSTRWRSIWLSTPVLDID) constitute an F-box domain. LRR repeat units follow at residues 86–113 (RDDV…EVDC), 134–160 (SLRL…HLEE), 161–186 (NIYY…TVVR), 187–210 (IVDI…KLVL), 215–240 (GWFI…SLKD), 272–297 (PVTF…TISG), and 322–350 (NARF…VLGL). One can recognise an FBD domain in the interval 361 to 406 (RVSSVPPCFLSSLEFVEIRSRLCRKRYVMKVARYFAKNSVMLKKFV).

This is F-box/FBD/LRR-repeat protein At5g22700 from Arabidopsis thaliana (Mouse-ear cress).